A 370-amino-acid chain; its full sequence is MFIKNDHAGDRKRLEDWRIKGYDPLTPPDLLQHEFPISAKGEENIIKARDSVCDILNGKDDRLVIVIGPCSLHDPKAAYDYADRLAKISEKLSKDLLIIMRAYLEKPRTTVGWKGLINDPDMNNSFQINKGLRISREMFIKLVEKLPIAGEMLDTISPQFLSDCFSLGAIGARTTESQLHRELASGLSFPIGFKNGTDGGLQVAIDAMRAAAHEHYFLSVTKPGVTAIVGTEGNKDTFLILRGGKNGTNFDKESVQNTKKQLEKAGLTDDSQKRIMIDCSHGNSNKDFKNQPKVAKCIYDQLTEGENSLCGVMIESNINEGRQDIPKEGGREGLKYGCSVTDACIGWESTEQVLELLAEGVRNRRKALKK.

It belongs to the class-I DAHP synthase family.

The enzyme catalyses D-erythrose 4-phosphate + phosphoenolpyruvate + H2O = 7-phospho-2-dehydro-3-deoxy-D-arabino-heptonate + phosphate. It participates in metabolic intermediate biosynthesis; chorismate biosynthesis; chorismate from D-erythrose 4-phosphate and phosphoenolpyruvate: step 1/7. Inhibited by phenyalanine. Functionally, stereospecific condensation of phosphoenolpyruvate (PEP) and D-erythrose-4-phosphate (E4P) giving rise to 3-deoxy-D-arabino-heptulosonate-7-phosphate (DAHP). The sequence is that of Phospho-2-dehydro-3-deoxyheptonate aldolase, phenylalanine-inhibited (ARO3) from Saccharomyces cerevisiae (strain ATCC 204508 / S288c) (Baker's yeast).